The primary structure comprises 509 residues: 2-isopropylmalate synthase (509 aa).

The Pyruvate carboxyltransferase domain occupies 4–266; the sequence is VRIFDTTLRD…YTGIKTEEIY (263 aa). The Mn(2+) site is built by Asp-13, His-201, His-203, and Asn-237. The interval 390-509 is regulatory domain; sequence TLDYFHISTG…FDYQAKGEKQ (120 aa).

The protein belongs to the alpha-IPM synthase/homocitrate synthase family. LeuA type 1 subfamily. Homodimer. Requires Mn(2+) as cofactor.

It is found in the cytoplasm. It carries out the reaction 3-methyl-2-oxobutanoate + acetyl-CoA + H2O = (2S)-2-isopropylmalate + CoA + H(+). It participates in amino-acid biosynthesis; L-leucine biosynthesis; L-leucine from 3-methyl-2-oxobutanoate: step 1/4. Catalyzes the condensation of the acetyl group of acetyl-CoA with 3-methyl-2-oxobutanoate (2-ketoisovalerate) to form 3-carboxy-3-hydroxy-4-methylpentanoate (2-isopropylmalate). This Carboxydothermus hydrogenoformans (strain ATCC BAA-161 / DSM 6008 / Z-2901) protein is 2-isopropylmalate synthase.